Consider the following 257-residue polypeptide: MDIYRLPALSDNYIFLLHDPNQNIGAVVDPAEVRPVIDKLESLGAELVTIFNTHHHFDHVGANKQLIQKFPQLKVYGGVEDRGRIPGQQVFLQEGDRVHFADRVGEVLFVPGHTIGHIAYYFPSVAFGETGELFCGDTLFAGGCGRLFEGTPAQMVDSLNKLRNLPDNTRIWCAHEYTLKNLQFAITVDKDNTDLQSRWAEVKTARGRNEATVPSMIGVEKRTNPFLRWEQPALQLAVQSQDPVQTFARLRGRKDRF.

The Zn(2+) site is built by His54, His56, Asp58, His59, His113, Asp137, and His175.

The protein belongs to the metallo-beta-lactamase superfamily. Glyoxalase II family. In terms of assembly, monomer. Requires Zn(2+) as cofactor.

The enzyme catalyses an S-(2-hydroxyacyl)glutathione + H2O = a 2-hydroxy carboxylate + glutathione + H(+). The protein operates within secondary metabolite metabolism; methylglyoxal degradation; (R)-lactate from methylglyoxal: step 2/2. In terms of biological role, thiolesterase that catalyzes the hydrolysis of S-D-lactoyl-glutathione to form glutathione and D-lactic acid. This is Hydroxyacylglutathione hydrolase from Trichodesmium erythraeum (strain IMS101).